The sequence spans 640 residues: Threonine--tRNA ligase (640 aa).

The region spanning 1–61 (MPAITLPDGS…EHDAYVEIVT (61 aa)) is the TGS domain. Residues 242–533 (DHRRLGRTQD…LIEHYGGALP (292 aa)) form a catalytic region. Residues C333, H384, and H510 each coordinate Zn(2+).

This sequence belongs to the class-II aminoacyl-tRNA synthetase family. Homodimer. Zn(2+) serves as cofactor.

It is found in the cytoplasm. The enzyme catalyses tRNA(Thr) + L-threonine + ATP = L-threonyl-tRNA(Thr) + AMP + diphosphate + H(+). In terms of biological role, catalyzes the attachment of threonine to tRNA(Thr) in a two-step reaction: L-threonine is first activated by ATP to form Thr-AMP and then transferred to the acceptor end of tRNA(Thr). Also edits incorrectly charged L-seryl-tRNA(Thr). The sequence is that of Threonine--tRNA ligase from Halorhodospira halophila (strain DSM 244 / SL1) (Ectothiorhodospira halophila (strain DSM 244 / SL1)).